Here is a 379-residue protein sequence, read N- to C-terminus: Homoserine O-acetyltransferase (379 aa).

Residues 52-356 enclose the AB hydrolase-1 domain; it reads NVVVVLHALT…VYGHDGFLVE (305 aa). The active-site Nucleophile is the Ser-157. Arg-227 is a substrate binding site. Residues Asp-320 and His-350 contribute to the active site. Substrate is bound at residue Asp-351.

This sequence belongs to the AB hydrolase superfamily. MetX family. In terms of assembly, homodimer.

It localises to the cytoplasm. It catalyses the reaction L-homoserine + acetyl-CoA = O-acetyl-L-homoserine + CoA. It functions in the pathway amino-acid biosynthesis; L-methionine biosynthesis via de novo pathway; O-acetyl-L-homoserine from L-homoserine: step 1/1. In terms of biological role, transfers an acetyl group from acetyl-CoA to L-homoserine, forming acetyl-L-homoserine. The protein is Homoserine O-acetyltransferase of Mycobacterium tuberculosis (strain CDC 1551 / Oshkosh).